Consider the following 1612-residue polypeptide: DNA topoisomerase 2-beta (1612 aa).

A2 is subject to N-acetylalanine. K3 is modified (N6-acetyllysine). Residues K21 and K22 each participate in a glycyl lysine isopeptide (Lys-Gly) (interchain with G-Cter in SUMO2) cross-link. Residues N100, N129, and 157-159 (SSN) each bind ATP. Residues K165 and K166 each participate in a glycyl lysine isopeptide (Lys-Gly) (interchain with G-Cter in SUMO2) cross-link. Residue 170-177 (GRNGYGAK) coordinates ATP. Residues K216 and K287 each participate in a glycyl lysine isopeptide (Lys-Gly) (interchain with G-Cter in SUMO2) cross-link. The tract at residues 351-353 (KKK) is interaction with DNA. Residues K355 and K361 each participate in a glycyl lysine isopeptide (Lys-Gly) (interchain with G-Cter in SUMO2) cross-link. 385–387 (QTK) is a binding site for ATP. Glycyl lysine isopeptide (Lys-Gly) (interchain with G-Cter in SUMO2) cross-links involve residues K425, K427, and K434. The region spanning 464–581 (CTLILTEGDS…SLLKHGFLEE (118 aa)) is the Toprim domain. Positions 470, 550, and 552 each coordinate Mg(2+). Residues K588, K593, K623, K631, K634, K664, and K700 each participate in a glycyl lysine isopeptide (Lys-Gly) (interchain with G-Cter in SUMO2) cross-link. Residues 724-1177 (IPSLVDGFKP…SPSDLWKEDL (454 aa)) enclose the Topo IIA-type catalytic domain. The active-site O-(5'-phospho-DNA)-tyrosine intermediate is Y814. Residues 999-1008 (KLQTTLTCNS) form an interaction with DNA region. Residue K1080 forms a Glycyl lysine isopeptide (Lys-Gly) (interchain with G-Cter in SUMO2) linkage. A disordered region spans residues 1098–1128 (AWKEAQEKAAEEEDTQNQHDDSSSDSGTPSG). Residues K1202, K1205, K1214, and K1215 each participate in a glycyl lysine isopeptide (Lys-Gly) (interchain with G-Cter in SUMO2) cross-link. S1224 bears the Phosphoserine mark. Residues K1238, K1250, and K1259 each participate in a glycyl lysine isopeptide (Lys-Gly) (interchain with G-Cter in SUMO2) cross-link. The disordered stretch occupies residues 1245-1586 (LLKKKKGDPD…FTSEPPALPR (342 aa)). T1280 bears the Phosphothreonine mark. Residues K1311 and K1315 each participate in a glycyl lysine isopeptide (Lys-Gly) (interchain with G-Cter in SUMO2) cross-link. 2 stretches are compositionally biased toward basic and acidic residues: residues 1322–1332 (PWSDDESKSES) and 1346–1358 (SLLR…RPKY). Residues S1324, S1328, S1330, S1332, and S1346 each carry the phosphoserine modification. Y1358 is modified (phosphotyrosine). Residues 1362–1379 (FSEEEEEDADDDDDNNDL) are compositionally biased toward acidic residues. S1363 carries the phosphoserine modification. K1385 is covalently cross-linked (Glycyl lysine isopeptide (Lys-Gly) (interchain with G-Cter in SUMO2)). S1387 carries the phosphoserine modification. Position 1390 is a phosphothreonine (T1390). Residue S1400 is modified to Phosphoserine. Y1408 carries the post-translational modification Phosphotyrosine. S1411 carries the phosphoserine modification. The segment covering 1417-1429 (ATPEKSSHDKKSQ) has biased composition (basic and acidic residues). K1427 participates in a covalent cross-link: Glycyl lysine isopeptide (Lys-Gly) (interchain with G-Cter in SUMO2). Phosphoserine is present on residues S1428, S1439, and S1441. K1443 is covalently cross-linked (Glycyl lysine isopeptide (Lys-Gly) (interchain with G-Cter in SUMO2)). Basic and acidic residues predominate over residues 1443 to 1453 (KSEDDSAKFDS). A phosphoserine mark is found at S1448, S1453, and S1460. A Glycyl lysine isopeptide (Lys-Gly) (interchain with G-Cter in SUMO2) cross-link involves residue K1477. Positions 1493–1499 (KAKRAPK) are interaction with PLSCR1. Phosphoserine is present on residues S1509, S1511, and S1513. Residues 1526-1536 (GKGRGAKKRKA) show a composition bias toward basic residues. A phosphoserine mark is found at S1537 and S1539. Residues 1550–1561 (KPSKTASKKPKK) are compositionally biased toward basic residues. Position 1562 is a phosphothreonine (T1562). Residues S1563 and S1568 each carry the phosphoserine modification. Residue Y1596 is modified to Phosphotyrosine. Position 1600 is a phosphoserine (S1600).

It belongs to the type II topoisomerase family. As to quaternary structure, homodimer. Interacts with PLSCR1 and KIAA1210. Mg(2+) serves as cofactor. It depends on Mn(2+) as a cofactor. Requires Ca(2+) as cofactor.

It localises to the nucleus. The protein resides in the nucleolus. The protein localises to the nucleoplasm. It carries out the reaction ATP-dependent breakage, passage and rejoining of double-stranded DNA.. Functionally, key decatenating enzyme that alters DNA topology by binding to two double-stranded DNA molecules, generating a double-stranded break in one of the strands, passing the intact strand through the broken strand, and religating the broken strand. This chain is DNA topoisomerase 2-beta (TOP2B), found in Cricetulus longicaudatus (Long-tailed dwarf hamster).